A 221-amino-acid polypeptide reads, in one-letter code: Probable septum site-determining protein MinC (221 aa).

It belongs to the MinC family. Interacts with MinD and FtsZ.

Functionally, cell division inhibitor that blocks the formation of polar Z ring septums. Rapidly oscillates between the poles of the cell to destabilize FtsZ filaments that have formed before they mature into polar Z rings. Prevents FtsZ polymerization. The sequence is that of Probable septum site-determining protein MinC from Shewanella oneidensis (strain ATCC 700550 / JCM 31522 / CIP 106686 / LMG 19005 / NCIMB 14063 / MR-1).